Reading from the N-terminus, the 156-residue chain is Cell division protein SepF (156 aa).

It belongs to the SepF family. Homodimer. Interacts with FtsZ.

Its subcellular location is the cytoplasm. Cell division protein that is part of the divisome complex and is recruited early to the Z-ring. Probably stimulates Z-ring formation, perhaps through the cross-linking of FtsZ protofilaments. Its function overlaps with FtsA. The chain is Cell division protein SepF from Bacillus cytotoxicus (strain DSM 22905 / CIP 110041 / 391-98 / NVH 391-98).